The sequence spans 174 residues: Adenine phosphoribosyltransferase (174 aa).

The protein belongs to the purine/pyrimidine phosphoribosyltransferase family. Homodimer.

The protein localises to the cytoplasm. The enzyme catalyses AMP + diphosphate = 5-phospho-alpha-D-ribose 1-diphosphate + adenine. Its pathway is purine metabolism; AMP biosynthesis via salvage pathway; AMP from adenine: step 1/1. Catalyzes a salvage reaction resulting in the formation of AMP, that is energically less costly than de novo synthesis. This chain is Adenine phosphoribosyltransferase, found in Phocaeicola vulgatus (strain ATCC 8482 / DSM 1447 / JCM 5826 / CCUG 4940 / NBRC 14291 / NCTC 11154) (Bacteroides vulgatus).